A 209-amino-acid polypeptide reads, in one-letter code: Kynurenine formamidase (209 aa).

Trp-18 contributes to the substrate binding site. 3 residues coordinate Zn(2+): His-48, His-52, and Asp-54. The active-site Proton donor/acceptor is the His-58. Zn(2+) is bound by residues His-160 and Glu-172.

Belongs to the Cyclase 1 superfamily. KynB family. Homodimer. Zn(2+) is required as a cofactor.

The catalysed reaction is N-formyl-L-kynurenine + H2O = L-kynurenine + formate + H(+). It participates in amino-acid degradation; L-tryptophan degradation via kynurenine pathway; L-kynurenine from L-tryptophan: step 2/2. Its function is as follows. Catalyzes the hydrolysis of N-formyl-L-kynurenine to L-kynurenine, the second step in the kynurenine pathway of tryptophan degradation. This chain is Kynurenine formamidase, found in Paraburkholderia phymatum (strain DSM 17167 / CIP 108236 / LMG 21445 / STM815) (Burkholderia phymatum).